A 515-amino-acid chain; its full sequence is 1-pyrroline-5-carboxylate dehydrogenase (515 aa).

Residues Glu286 and Cys320 contribute to the active site.

Belongs to the aldehyde dehydrogenase family. RocA subfamily.

It catalyses the reaction L-glutamate 5-semialdehyde + NAD(+) + H2O = L-glutamate + NADH + 2 H(+). The protein operates within amino-acid degradation; L-proline degradation into L-glutamate; L-glutamate from L-proline: step 2/2. This Bacillus cereus (strain B4264) protein is 1-pyrroline-5-carboxylate dehydrogenase.